We begin with the raw amino-acid sequence, 337 residues long: Serpentine receptor class beta-6 (337 aa).

Helical transmembrane passes span 20–40 (QFYT…LIIF), 62–82 (ILIS…IPFL), 98–118 (IFQN…LGIT), 138–158 (IGVF…YFFF), 183–203 (WLCY…YFLV), 234–254 (TFIS…TLII), and 273–293 (GVYI…CVIL).

The protein belongs to the nematode receptor-like protein srb family. Expressed in the ADL, ADF and ASH chemosensory neurons in the head and in the PHA and PHB chemosensory neurons in the tail. Low expression also observed in the egg-laying structures in the mid-body region.

Its subcellular location is the cell membrane. Functionally, mediates recognition and avoidance of Streptomyces species by detecting dodecanoic acid secreted by the bacteria. Also mediates avoidance of decanoic acid which is not secreted by Streptomyces species but this may represent an additional important avoidance response in the environment. The sequence is that of Serpentine receptor class beta-6 (srb-6) from Caenorhabditis elegans.